The sequence spans 477 residues: uncharacterized protein (477 aa).

This is an uncharacterized protein from Aquifex aeolicus (strain VF5).